The chain runs to 883 residues: Aldehyde-alcohol dehydrogenase (883 aa).

An aldehyde dehydrogenase region spans residues 13-456 (KLVAEKHVDE…DNVSAINLLN (444 aa)). Residues 121-126 (ITPTTN), Gly-206, and Gly-224 contribute to the NAD(+) site. Catalysis depends on Cys-257, which acts as the Nucleophile. NAD(+) is bound by residues Glu-355, Leu-435, and 438–443 (GSYGRN). The segment at 457 to 464 (IKKVGRRR) is linker. Residues Asp-500, Asp-534, 561–565 (GSPMD), 612–613 (TT), Val-625, Lys-634, and Leu-653 each bind NAD(+). Asp-668, His-672, His-736, and His-750 together coordinate Fe cation.

It in the N-terminal section; belongs to the aldehyde dehydrogenase family. This sequence in the C-terminal section; belongs to the iron-containing alcohol dehydrogenase family. The cofactor is Fe(2+).

It carries out the reaction an aldehyde + NAD(+) + H2O = a carboxylate + NADH + 2 H(+). The catalysed reaction is ethanol + NAD(+) = acetaldehyde + NADH + H(+). Functionally, has alcohol dehydrogenase activity. Has aldehyde dehydrogenase activity. Plays a role in enhancing virulence in mice, under ethanol stress conditions, perhaps by inducing expression of pneumolysin (Ply) and increasing production of hydrogen peroxide H(2)O(2). May be considered a potential virulence factor. The sequence is that of Aldehyde-alcohol dehydrogenase from Streptococcus pneumoniae serotype 2 (strain D39 / NCTC 7466).